Here is a 396-residue protein sequence, read N- to C-terminus: Elongation factor Tu (396 aa).

In terms of domain architecture, tr-type G spans 11–205 (KPHVNIGTIG…TVDEYIPTPE (195 aa)). Residues 20–27 (GHVDHGKT) form a G1 region. 20 to 27 (GHVDHGKT) is a GTP binding site. A Mg(2+)-binding site is contributed by Thr27. The G2 stretch occupies residues 61-65 (GITIN). A G3 region spans residues 82 to 85 (DAPG). GTP is bound by residues 82 to 86 (DAPGH) and 137 to 140 (NKVD). Residues 137–140 (NKVD) form a G4 region. The segment at 175–177 (SAL) is G5.

It belongs to the TRAFAC class translation factor GTPase superfamily. Classic translation factor GTPase family. EF-Tu/EF-1A subfamily. In terms of assembly, monomer.

The protein localises to the cytoplasm. The catalysed reaction is GTP + H2O = GDP + phosphate + H(+). Its function is as follows. GTP hydrolase that promotes the GTP-dependent binding of aminoacyl-tRNA to the A-site of ribosomes during protein biosynthesis. This Lactobacillus gasseri (strain ATCC 33323 / DSM 20243 / BCRC 14619 / CIP 102991 / JCM 1131 / KCTC 3163 / NCIMB 11718 / NCTC 13722 / AM63) protein is Elongation factor Tu.